A 201-amino-acid polypeptide reads, in one-letter code: Cytochrome c4 (201 aa).

The signal sequence occupies residues 1–20; sequence MNKLLVSLLLTLGLTGLAHA. 8 residues coordinate heme c: Cys34, Cys37, His38, Met77, Cys130, Cys133, His134, and Met178.

Post-translationally, binds 2 heme c groups covalently per subunit.

The protein localises to the periplasm. In terms of biological role, diheme, high potential cytochrome c believed to be an intermediate electron donor to terminal oxidation systems. The sequence is that of Cytochrome c4 (cc4) from Pseudomonas aeruginosa (strain ATCC 15692 / DSM 22644 / CIP 104116 / JCM 14847 / LMG 12228 / 1C / PRS 101 / PAO1).